We begin with the raw amino-acid sequence, 347 residues long: tRNA N6-adenosine threonylcarbamoyltransferase (347 aa).

Residues His-117 and His-121 each coordinate Fe cation. Residues Leu-140–Gly-144, Asp-173, Gly-186, and Asn-280 contribute to the substrate site. Asp-308 is a Fe cation binding site.

The protein belongs to the KAE1 / TsaD family. Requires Fe(2+) as cofactor.

It localises to the cytoplasm. It carries out the reaction L-threonylcarbamoyladenylate + adenosine(37) in tRNA = N(6)-L-threonylcarbamoyladenosine(37) in tRNA + AMP + H(+). In terms of biological role, required for the formation of a threonylcarbamoyl group on adenosine at position 37 (t(6)A37) in tRNAs that read codons beginning with adenine. Is involved in the transfer of the threonylcarbamoyl moiety of threonylcarbamoyl-AMP (TC-AMP) to the N6 group of A37, together with TsaE and TsaB. TsaD likely plays a direct catalytic role in this reaction. This chain is tRNA N6-adenosine threonylcarbamoyltransferase, found in Psychrobacter sp. (strain PRwf-1).